A 65-amino-acid polypeptide reads, in one-letter code: Cecropin (65 aa).

A signal peptide spans 1–23 (MNFVKVLFFISACILIMLSAVSG).

Belongs to the cecropin family.

It is found in the secreted. Functionally, has antibacterial activity. The sequence is that of Cecropin (LOC113514368) from Galleria mellonella (Greater wax moth).